The sequence spans 341 residues: Methionine import ATP-binding protein MetN (341 aa).

The region spanning I2–V241 is the ABC transporter domain. G38 to S45 contributes to the ATP binding site.

It belongs to the ABC transporter superfamily. Methionine importer (TC 3.A.1.24) family. The complex is composed of two ATP-binding proteins (MetN), two transmembrane proteins (MetP) and a solute-binding protein (MetQ).

The protein resides in the cell membrane. It carries out the reaction L-methionine(out) + ATP + H2O = L-methionine(in) + ADP + phosphate + H(+). The enzyme catalyses D-methionine(out) + ATP + H2O = D-methionine(in) + ADP + phosphate + H(+). In terms of biological role, part of the ABC transporter complex MetNPQ involved in methionine import. Responsible for energy coupling to the transport system. It has also been shown to be involved in methionine sulfoxide transport. The polypeptide is Methionine import ATP-binding protein MetN (Bacillus subtilis (strain 168)).